The primary structure comprises 297 residues: N-acetylneuraminate lyase (297 aa).

Aceneuramate contacts are provided by S47 and T48. Y137 (proton donor) is an active-site residue. Residue K165 is the Schiff-base intermediate with substrate of the active site. Aceneuramate-binding residues include T167, G189, D191, E192, and S208.

This sequence belongs to the DapA family. NanA subfamily. In terms of assembly, homotetramer.

It localises to the cytoplasm. It catalyses the reaction aceneuramate = aldehydo-N-acetyl-D-mannosamine + pyruvate. The protein operates within amino-sugar metabolism; N-acetylneuraminate degradation; D-fructose 6-phosphate from N-acetylneuraminate: step 1/5. Catalyzes the reversible aldol cleavage of N-acetylneuraminic acid (sialic acid; Neu5Ac) to form pyruvate and N-acetylmannosamine (ManNAc) via a Schiff base intermediate. This Salmonella choleraesuis (strain SC-B67) protein is N-acetylneuraminate lyase.